Here is a 100-residue protein sequence, read N- to C-terminus: Large ribosomal subunit protein uL23 (100 aa).

It belongs to the universal ribosomal protein uL23 family. As to quaternary structure, part of the 50S ribosomal subunit. Contacts protein L29, and trigger factor when it is bound to the ribosome.

Functionally, one of the early assembly proteins it binds 23S rRNA. One of the proteins that surrounds the polypeptide exit tunnel on the outside of the ribosome. Forms the main docking site for trigger factor binding to the ribosome. The sequence is that of Large ribosomal subunit protein uL23 from Xylella fastidiosa (strain M23).